The chain runs to 349 residues: MSDFQREQRKNEHVEIAMAQSDAMHSDFDKMRFVHHSIPSINVNDIDLTSQTPDLTMTYPVYINAMTGGSEWTKNINEKLAVVARETGLAMAVGSTHAALRNPRMAETFTIARKMNPEGMIFSNVGADVPVEKALEAVELLEAQALQIHVNSPQELVMPEGNREFVTWLDNIASIVSRVSVPVIIKEVGFGMSKELMHDLQQIGVKYVDVSGKGGTNFVDIENERRANKDMDYLSSWGQSTVESLLETTAYQSEISVFASGGLRTPLDAIKSLALGAKATGMSRPFLNQVENNGIAHTVAYVESFIEHMKSIMTMLDAKNIDDLTQKQIVFSPEILSWIEQRNLNIHRG.

9–10 (RK) lines the substrate pocket. FMN is bound by residues 65-67 (AMT), S95, and N124. 95–97 (STH) contacts substrate. Q154 provides a ligand contact to substrate. Mg(2+) is bound at residue E155. Residues K186, S211, T216, 262 to 264 (GLR), and 283 to 284 (SR) contribute to the FMN site.

This sequence belongs to the IPP isomerase type 2 family. Homooctamer. Dimer of tetramers. FMN is required as a cofactor. Requires NADPH as cofactor. The cofactor is Mg(2+).

The protein resides in the cytoplasm. The catalysed reaction is isopentenyl diphosphate = dimethylallyl diphosphate. In terms of biological role, involved in the biosynthesis of isoprenoids. Catalyzes the 1,3-allylic rearrangement of the homoallylic substrate isopentenyl (IPP) to its allylic isomer, dimethylallyl diphosphate (DMAPP). This chain is Isopentenyl-diphosphate delta-isomerase, found in Staphylococcus aureus.